A 2465-amino-acid chain; its full sequence is Protein DOP1A (2465 aa).

Disordered stretches follow at residues 559–600 (PSGQ…SSES), 625–646 (GAAA…TVGS), and 705–733 (TEHQ…KEKN). Residues 633 to 646 (STSSETETASTVGS) are compositionally biased toward low complexity. The segment covering 707–733 (HQGDLGREQGETSKWDRNSQGDVKEKN) has biased composition (basic and acidic residues). At Ser-1266 the chain carries Phosphoserine. 2 stretches are compositionally biased toward basic and acidic residues: residues 1282–1291 (EKETIVKESG) and 1305–1315 (KKDDDKKKSSN). Residues 1282–1315 (EKETIVKESGKQPGAKPKVKLARKKDDDKKKSSN) are disordered.

Belongs to the DOP1 family.

The protein resides in the golgi apparatus membrane. Its function is as follows. May be involved in protein traffic between late Golgi and early endosomes. This Homo sapiens (Human) protein is Protein DOP1A.